The chain runs to 349 residues: Hypoxia-inducible factor 1-alpha inhibitor (349 aa).

The span at 1–14 shows a compositional bias: low complexity; it reads MAATAAEVAASGSG. The disordered stretch occupies residues 1–51; sequence MAATAAEVAASGSGEAREEAEAPGPAWDESQLRSYSFPTRPIPRLSQSDPR. Alanine 2 bears the N-acetylalanine mark. Residues 2–125 are interaction with VHL; it reads AATAAEVAAS…PRSNREEIKF (124 aa). The region spanning 142–307 is the JmjC domain; that stretch reads ERLYLQQTLN…KGAPTPKRIE (166 aa). Tyrosine 145 is a 2-oxoglutarate binding site. Substrate-binding positions include aspartate 152 and 181–183; that span reads QLT. Threonine 196 lines the 2-oxoglutarate pocket. Fe cation-binding residues include histidine 199 and aspartate 201. 201–203 contributes to the substrate binding site; the sequence is DEQ. Positions 205 and 214 each coordinate 2-oxoglutarate. Position 238-239 (238-239) interacts with substrate; the sequence is RQ. Histidine 279 serves as a coordination point for Fe cation. Asparagine 294 is a binding site for 2-oxoglutarate. Substrate-binding residues include alanine 300 and asparagine 321.

As to quaternary structure, homodimer; homodimerization is essential for catalytic activity. Interacts with VHL and HIF1A. Part of a complex with VHL, HIF1A and HDAC1 or HDAC2 or HDAC3. Interacts with NFKB1 and NFKBIA. Interacts with NOTCH1, NOTCH2 and NOTCH3 but not with NOTCH4. Interacts with ABPA3. Interacts with TNKS2. Interacts with PPP1R12A. Interacts with UBE3A. Interacts with ASB4. Interacts with ANKS3. Interacts with NECAB3; the interaction is indirect and seems to be mediated by APBA3. It depends on Fe(2+) as a cofactor.

The protein localises to the nucleus. It is found in the cytoplasm. Its subcellular location is the perinuclear region. It catalyses the reaction L-asparaginyl-[hypoxia-inducible factor alpha subunit] + 2-oxoglutarate + O2 = (3S)-3-hydroxy-L-asparaginyl-[hypoxia-inducible factor alpha subunit] + succinate + CO2. The enzyme catalyses L-histidyl-[ankyrin-repeat domain protein] + 2-oxoglutarate + O2 = (3S)-3-hydroxy-L-histidyl-[ankyrin-repeat domain protein] + succinate + CO2. It carries out the reaction L-asparaginyl-[ankyrin-repeat domain protein] + 2-oxoglutarate + O2 = (3S)-3-hydroxy-L-asparaginyl-[ankyrin-repeat domain protein] + succinate + CO2. The catalysed reaction is L-aspartyl-[ankyrin-repeat domain protein] + 2-oxoglutarate + O2 = (3S)-3-hydroxy-L-aspartyl-[ankyrin-repeat domain protein] + succinate + CO2. Functionally, hydroxylates HIF-1 alpha at 'Asn-799' in the C-terminal transactivation domain (CAD). Functions as an oxygen sensor and, under normoxic conditions, the hydroxylation prevents interaction of HIF-1 with transcriptional coactivators including Cbp/p300-interacting transactivator. Involved in transcriptional repression through interaction with HIF1A, VHL and histone deacetylases. Hydroxylates specific Asn residues within ankyrin repeat domains (ARD) of NFKB1, NFKBIA, NOTCH1, ASB4, PPP1R12A and several other ARD-containing proteins. Also hydroxylates Asp and His residues within ARDs of ANK1 and TNKS2, respectively. Negatively regulates NOTCH1 activity, accelerating myogenic differentiation. Positively regulates ASB4 activity, promoting vascular differentiation. The protein is Hypoxia-inducible factor 1-alpha inhibitor (Hif1an) of Mus musculus (Mouse).